The sequence spans 101 residues: UPF0473 protein STER_1939 (101 aa).

This sequence belongs to the UPF0473 family.

The polypeptide is UPF0473 protein STER_1939 (Streptococcus thermophilus (strain ATCC BAA-491 / LMD-9)).